The sequence spans 327 residues: Chlorophenol reductase (327 aa).

The N-terminal stretch at 1–24 (MKKTLGIILSISLAFSVLALPIFA) is a signal peptide. Positions 65–110 (TYYTVVSGDFFWQIAAKHGLTIDALAKLNPQIKNVNLIFPGQKILV) constitute a LysM domain.

Requires cob(I)alamin as cofactor.

The protein localises to the secreted. Its subcellular location is the cell wall. The protein resides in the cell membrane. Its activity is regulated as follows. Inhibited by sulfide and to a lesser extent by nitrite. Reductive dechlorination of ortho-chlorophenols. Dechlorinates in the ortho position with respect to the hydroxyl group. The chain is Chlorophenol reductase from Desulfitobacterium hafniense (Desulfitobacterium frappieri).